We begin with the raw amino-acid sequence, 148 residues long: Putative nickel-responsive regulator (148 aa).

Positions 88, 99, 101, and 107 each coordinate Ni(2+).

The protein belongs to the transcriptional regulatory CopG/NikR family. Ni(2+) serves as cofactor.

Functionally, transcriptional regulator. The chain is Putative nickel-responsive regulator from Helicobacter pylori (strain P12).